The primary structure comprises 159 residues: ATP synthase subunit b 2 (159 aa).

Residues M1 to M21 form a helical membrane-spanning segment.

Belongs to the ATPase B chain family. As to quaternary structure, F-type ATPases have 2 components, F(1) - the catalytic core - and F(0) - the membrane proton channel. F(1) has five subunits: alpha(3), beta(3), gamma(1), delta(1), epsilon(1). F(0) has three main subunits: a(1), b(2) and c(10-14). The alpha and beta chains form an alternating ring which encloses part of the gamma chain. F(1) is attached to F(0) by a central stalk formed by the gamma and epsilon chains, while a peripheral stalk is formed by the delta and b chains.

The protein localises to the cell inner membrane. F(1)F(0) ATP synthase produces ATP from ADP in the presence of a proton or sodium gradient. F-type ATPases consist of two structural domains, F(1) containing the extramembraneous catalytic core and F(0) containing the membrane proton channel, linked together by a central stalk and a peripheral stalk. During catalysis, ATP synthesis in the catalytic domain of F(1) is coupled via a rotary mechanism of the central stalk subunits to proton translocation. Its function is as follows. Component of the F(0) channel, it forms part of the peripheral stalk, linking F(1) to F(0). The sequence is that of ATP synthase subunit b 2 from Brucella canis (strain ATCC 23365 / NCTC 10854 / RM-666).